The sequence spans 434 residues: Glutamyl-tRNA reductase (434 aa).

Residues 49 to 52 (TCNR), Ser-109, 114 to 116 (EPQ), and Gln-120 each bind substrate. Cys-50 serves as the catalytic Nucleophile. 189–194 (GAGEMC) serves as a coordination point for NADP(+).

The protein belongs to the glutamyl-tRNA reductase family. As to quaternary structure, homodimer.

The catalysed reaction is (S)-4-amino-5-oxopentanoate + tRNA(Glu) + NADP(+) = L-glutamyl-tRNA(Glu) + NADPH + H(+). It functions in the pathway porphyrin-containing compound metabolism; protoporphyrin-IX biosynthesis; 5-aminolevulinate from L-glutamyl-tRNA(Glu): step 1/2. Its function is as follows. Catalyzes the NADPH-dependent reduction of glutamyl-tRNA(Glu) to glutamate 1-semialdehyde (GSA). This Trichlorobacter lovleyi (strain ATCC BAA-1151 / DSM 17278 / SZ) (Geobacter lovleyi) protein is Glutamyl-tRNA reductase.